A 72-amino-acid chain; its full sequence is MAKEENIEMQGTVLDTLPNTMFRVELENGHVVTAHISGKMRKNYIRILTGDKVTVELTPYDLSKGRIIFRAR.

Residues 1-72 form the S1-like domain; it reads MAKEENIEMQ…SKGRIIFRAR (72 aa).

The protein belongs to the IF-1 family. Component of the 30S ribosomal translation pre-initiation complex which assembles on the 30S ribosome in the order IF-2 and IF-3, IF-1 and N-formylmethionyl-tRNA(fMet); mRNA recruitment can occur at any time during PIC assembly.

The protein localises to the cytoplasm. In terms of biological role, one of the essential components for the initiation of protein synthesis. Stabilizes the binding of IF-2 and IF-3 on the 30S subunit to which N-formylmethionyl-tRNA(fMet) subsequently binds. Helps modulate mRNA selection, yielding the 30S pre-initiation complex (PIC). Upon addition of the 50S ribosomal subunit IF-1, IF-2 and IF-3 are released leaving the mature 70S translation initiation complex. The protein is Translation initiation factor IF-1 of Colwellia psychrerythraea (strain 34H / ATCC BAA-681) (Vibrio psychroerythus).